The chain runs to 485 residues: Noelin (485 aa).

The first 16 residues, 1–16 (MSVPLLKIGVVLSTMA), serve as a signal peptide directing secretion. N33, N103, N187, N288, N307, N394, N431, and N473 each carry an N-linked (GlcNAc...) asparagine glycan. Positions 87–225 (RDARTKQLRQ…ERLRACMQKL (139 aa)) form a coiled coil. Positions 226 to 478 (ACGKLTGISD…QILYNVTLFH (253 aa)) constitute an Olfactomedin-like domain. A disulfide bridge links C227 with C409.

Homotetramer; disulfide-linked. Dimer of dimers, giving rise to a V-shaped homotretramer. Component of the AMPAR complex. In terms of processing, glycosylated.

It localises to the secreted. The protein resides in the synapse. The protein localises to the endoplasmic reticulum. Its subcellular location is the cell projection. It is found in the axon. It localises to the perikaryon. Functionally, contributes to the regulation of axonal growth. May play an important role in regulating the production of neural crest cells by the neural tube. The chain is Noelin (OLFM1) from Gallus gallus (Chicken).